Reading from the N-terminus, the 208-residue chain is Imidazole glycerol phosphate synthase subunit HisH (208 aa).

Positions 1–206 (MIVIVDYDTG…KEMTEDEALS (206 aa)) constitute a Glutamine amidotransferase type-1 domain. The Nucleophile role is filled by cysteine 79. Residues histidine 181 and glutamate 183 contribute to the active site.

In terms of assembly, heterodimer of HisH and HisF.

It localises to the cytoplasm. The enzyme catalyses 5-[(5-phospho-1-deoxy-D-ribulos-1-ylimino)methylamino]-1-(5-phospho-beta-D-ribosyl)imidazole-4-carboxamide + L-glutamine = D-erythro-1-(imidazol-4-yl)glycerol 3-phosphate + 5-amino-1-(5-phospho-beta-D-ribosyl)imidazole-4-carboxamide + L-glutamate + H(+). It carries out the reaction L-glutamine + H2O = L-glutamate + NH4(+). It participates in amino-acid biosynthesis; L-histidine biosynthesis; L-histidine from 5-phospho-alpha-D-ribose 1-diphosphate: step 5/9. Its function is as follows. IGPS catalyzes the conversion of PRFAR and glutamine to IGP, AICAR and glutamate. The HisH subunit catalyzes the hydrolysis of glutamine to glutamate and ammonia as part of the synthesis of IGP and AICAR. The resulting ammonia molecule is channeled to the active site of HisF. This Lacticaseibacillus casei (strain BL23) (Lactobacillus casei) protein is Imidazole glycerol phosphate synthase subunit HisH.